Here is a 281-residue protein sequence, read N- to C-terminus: Elongation factor Ts (281 aa).

Residues 80-83 form an involved in Mg(2+) ion dislocation from EF-Tu region; sequence TDFV.

It belongs to the EF-Ts family.

It is found in the cytoplasm. Functionally, associates with the EF-Tu.GDP complex and induces the exchange of GDP to GTP. It remains bound to the aminoacyl-tRNA.EF-Tu.GTP complex up to the GTP hydrolysis stage on the ribosome. In Vibrio atlanticus (strain LGP32) (Vibrio splendidus (strain Mel32)), this protein is Elongation factor Ts.